A 143-amino-acid chain; its full sequence is 3-dehydroquinate dehydratase (143 aa).

Tyr23 serves as the catalytic Proton acceptor. 3 residues coordinate substrate: Asn74, His80, and Asp87. The active-site Proton donor is the His100. Substrate is bound by residues 101-102 (IS) and Arg111.

The protein belongs to the type-II 3-dehydroquinase family. In terms of assembly, homododecamer.

The catalysed reaction is 3-dehydroquinate = 3-dehydroshikimate + H2O. The protein operates within metabolic intermediate biosynthesis; chorismate biosynthesis; chorismate from D-erythrose 4-phosphate and phosphoenolpyruvate: step 3/7. Catalyzes a trans-dehydration via an enolate intermediate. This Endomicrobium trichonymphae protein is 3-dehydroquinate dehydratase.